We begin with the raw amino-acid sequence, 61 residues long: Sec-independent protein translocase protein TatA (61 aa).

Residues 1 to 21 traverse the membrane as a helical segment; it reads MFGLGITEILLILGIIILIFG.

This sequence belongs to the TatA/E family. In terms of assembly, the Tat system comprises two distinct complexes: a TatABC complex, containing multiple copies of TatA, TatB and TatC subunits, and a separate TatA complex, containing only TatA subunits. Substrates initially bind to the TatABC complex, which probably triggers association of the separate TatA complex to form the active translocon.

The protein resides in the cell inner membrane. In terms of biological role, part of the twin-arginine translocation (Tat) system that transports large folded proteins containing a characteristic twin-arginine motif in their signal peptide across membranes. TatA could form the protein-conducting channel of the Tat system. The polypeptide is Sec-independent protein translocase protein TatA (Maridesulfovibrio salexigens (strain ATCC 14822 / DSM 2638 / NCIMB 8403 / VKM B-1763) (Desulfovibrio salexigens)).